Here is a 434-residue protein sequence, read N- to C-terminus: Serine hydroxymethyltransferase (434 aa).

(6S)-5,6,7,8-tetrahydrofolate is bound by residues leucine 133 and 137–139 (GHL). At lysine 242 the chain carries N6-(pyridoxal phosphate)lysine.

The protein belongs to the SHMT family. As to quaternary structure, homodimer. Pyridoxal 5'-phosphate is required as a cofactor.

It localises to the cytoplasm. The catalysed reaction is (6R)-5,10-methylene-5,6,7,8-tetrahydrofolate + glycine + H2O = (6S)-5,6,7,8-tetrahydrofolate + L-serine. Its pathway is one-carbon metabolism; tetrahydrofolate interconversion. It functions in the pathway amino-acid biosynthesis; glycine biosynthesis; glycine from L-serine: step 1/1. Catalyzes the reversible interconversion of serine and glycine with tetrahydrofolate (THF) serving as the one-carbon carrier. This reaction serves as the major source of one-carbon groups required for the biosynthesis of purines, thymidylate, methionine, and other important biomolecules. Also exhibits THF-independent aldolase activity toward beta-hydroxyamino acids, producing glycine and aldehydes, via a retro-aldol mechanism. The chain is Serine hydroxymethyltransferase from Methylorubrum extorquens (strain CM4 / NCIMB 13688) (Methylobacterium extorquens).